The primary structure comprises 273 residues: Tyrosinase (273 aa).

The N-terminal stretch at 1–18 (MLLFTMGLLLAILQPSTG) is a signal peptide. Residues Asn-86, Asn-111, and Asn-161 are each glycosylated (N-linked (GlcNAc...) asparagine). Cu cation-binding residues include His-180, His-202, and His-211. Residue Asn-230 is glycosylated (N-linked (GlcNAc...) asparagine).

It belongs to the tyrosinase family. Cu(2+) serves as cofactor.

It localises to the melanosome membrane. Its subcellular location is the melanosome. The enzyme catalyses 2 L-dopa + O2 = 2 L-dopaquinone + 2 H2O. The catalysed reaction is L-tyrosine + O2 = L-dopaquinone + H2O. In terms of biological role, this is a copper-containing oxidase that functions in the formation of pigments such as melanins and other polyphenolic compounds. Catalyzes the initial and rate limiting step in the cascade of reactions leading to melanin production from tyrosine. In addition to hydroxylating tyrosine to DOPA (3,4-dihydroxyphenylalanine), also catalyzes the oxidation of DOPA to DOPA-quinone, and possibly the oxidation of DHI (5,6-dihydroxyindole) to indole-5,6 quinone. The polypeptide is Tyrosinase (TYR) (Coturnix japonica (Japanese quail)).